Here is a 154-residue protein sequence, read N- to C-terminus: Probable cyclic pyranopterin monophosphate synthase (154 aa).

Residues leucine 74 to histidine 76 and methionine 110 to glutamate 111 contribute to the substrate site. Aspartate 125 is an active-site residue.

Belongs to the MoaC family. In terms of assembly, homohexamer; trimer of dimers.

It catalyses the reaction (8S)-3',8-cyclo-7,8-dihydroguanosine 5'-triphosphate = cyclic pyranopterin phosphate + diphosphate. Its pathway is cofactor biosynthesis; molybdopterin biosynthesis. Functionally, catalyzes the conversion of (8S)-3',8-cyclo-7,8-dihydroguanosine 5'-triphosphate to cyclic pyranopterin monophosphate (cPMP). This is Probable cyclic pyranopterin monophosphate synthase from Methanosphaerula palustris (strain ATCC BAA-1556 / DSM 19958 / E1-9c).